The primary structure comprises 873 residues: MYQTTAALRSAFLEYFRQQGHQVVDSSSLVPGNDPTLLFTNAGMNQFKDCFLGMEKRSYVRAATAQRCVRAGGKHNDLDNVGYTARHHTFFEMLGNFSFGDYFKEDAIRFAWEFLTGTLKLPKEKLCVTVYHTDDEAFDIWNKQIGVPAENIIRIGDNKGAPFASDNFWQMGDTGPCGPCTEIFYDHGEHIWGGRPGSPEEDGDRFIEIWNIVFMQYNRQSDGTLDPLPKPAVDTGMGIERISAIMQGVHSNYEIDIFQKLIAKAAEIIGVSDLENKSLRVIADHIRSCAFLVADGVMPSNEGRGYVLRRIIRRAVRHGNKLGATDTFFYKLVPTLIEAMGDAAKELKATQTIVEKALKAEEEQFARTLERGLGMLDAALADLKGDTLDGETVFKLYDTYGFPVDLTADVCRERNLKVDEEGFNAAMAEQRSRAQAAGQFSADYNAALKIDTATDFCGYTELAAESKVVALYRDGESVDAAEAGAVLVVVLDNTPFYAESGGQVGDKGQLLAEGVEFNVADTQKFGQGIGHKGQLALGSIKVGDSLKAMVDKKLRHRTELNHSVTHLLHAALRQVLGTHVTQKGSLVDPERLRFDFSHFEGVKREELKAVEDLVNTQIRRNHELNFAEMDIEEAKAKGAMALFGEKYDSKVRVVTMGDFSIELCGGTHVGRTGDIGLFKITSEGGIAAGIRRIEAVTGAAAMAYVAQQQAELEEAAALLKGDVASVVAKLKAQLDKARQLEKENAQLKDKLAAAASADLAGDAQEINGVKVLVKRLEGVEAGALRGLQDELKQKLKSGVVLLAIGSGDKVNLIAGVTQDLTGKVKAGELVAMVAAQVGGKGGGRPDMAQAGGSEPAKLDGALASVVPWLNERL.

Zn(2+) contacts are provided by His-562, His-566, Cys-664, and His-668.

This sequence belongs to the class-II aminoacyl-tRNA synthetase family. Zn(2+) serves as cofactor.

Its subcellular location is the cytoplasm. The enzyme catalyses tRNA(Ala) + L-alanine + ATP = L-alanyl-tRNA(Ala) + AMP + diphosphate. Its function is as follows. Catalyzes the attachment of alanine to tRNA(Ala) in a two-step reaction: alanine is first activated by ATP to form Ala-AMP and then transferred to the acceptor end of tRNA(Ala). Also edits incorrectly charged Ser-tRNA(Ala) and Gly-tRNA(Ala) via its editing domain. This chain is Alanine--tRNA ligase, found in Shewanella amazonensis (strain ATCC BAA-1098 / SB2B).